The chain runs to 683 residues: MLNGWRRAFCTSIPKETNQNDVDDDGLVGLRHKSTSRFGFFSTPSTPRSDSGTGTYSLRCRTSTATAVSTTSSLPGTPKLKCKTTTTGETTPRNRSLVSLLTPSSSSISPASFTLLKSKLRFKQSSSNKCGICLQSVKSGQGTAIFTAECSHTFHFPCVTSRAAANHNRLASCPVCGSSLLPEIRNYAKPESQIKPEIKNKSLRVYNDDEALISSPISPAGFHTILESDENEDCEEFTGFSVNTPSPLTAKLLTDRNVDVKLSPESAIVASGKGYETYSVVMKVKSPPFPTARGFARRVPVDLVAVLDVSGRNSGGKLEMLKQTMRIVLSNLREMDRLSIIAFSSSSKRLSPLRRMTANGRRSARRIVDIITVPGSVSGVGIDFSGEGMSVNDALKKAVKVLDDRRQKNPFTAVFVLTDRQAHQVAQLAHSRIPIHTIWLSHAIPEDAFARTINGYLSLSVQDLGLQLGIVSGLGQGEITSVYSLSGRPAWLGTGSIRLGDMYAEEERALLVEIKSPVNNSLTGSRSHKIMTVRSRYVDPTTQELRNPEDRALLIPTPLTVRSSSNPNISRLRNLHVSTRAVAESRRLIERNHYSGAHRLLTSARALLVQHGLSSSDACIRGLDAEIADLNSVKGRHVAASESLESLTPTSAWKAAERLAKVAMVRKHMNRVSDLHGFENARF.

The segment at 130–176 adopts an RING-type; atypical zinc-finger fold; it reads CGICLQSVKSGQGTAIFTAECSHTFHFPCVTSRAAANHNRLASCPVC. A VWFA domain is found at 302-438; it reads DLVAVLDVSG…AHSRIPIHTI (137 aa).

Expressed in root tips and leaf primordia.

The enzyme catalyses S-ubiquitinyl-[E2 ubiquitin-conjugating enzyme]-L-cysteine + [acceptor protein]-L-lysine = [E2 ubiquitin-conjugating enzyme]-L-cysteine + N(6)-ubiquitinyl-[acceptor protein]-L-lysine.. E3 ubiquitin-protein ligase involved in the regulation of root growth. Acts as a positive regulator of root gravitropism. Possesses E3 protein ligase activity in vitro. This Arabidopsis thaliana (Mouse-ear cress) protein is E3 ubiquitin-protein ligase WAVH1.